The following is an 814-amino-acid chain: Putative serine/threonine-protein kinase-like protein CCR3 (814 aa).

Residues 1–30 (MKRFINSTVTFSVTVTIAVIIFFLLSPVTS) form the signal peptide. 10 N-linked (GlcNAc...) asparagine glycosylation sites follow: asparagine 6, asparagine 68, asparagine 136, asparagine 215, asparagine 226, asparagine 251, asparagine 260, asparagine 275, asparagine 299, and asparagine 309. The Extracellular portion of the chain corresponds to 31–393 (LGSGSTYAVV…SSPPSKALTR (363 aa)). Residues 366–381 (SQFPLPPPPPPPPPSP) show a composition bias toward pro residues. The disordered stretch occupies residues 366–388 (SQFPLPPPPPPPPPSPSTSSPPS). Residues 394–414 (GLLAFAIVGSVGAFAGICSVV) form a helical membrane-spanning segment. The Cytoplasmic segment spans residues 415–814 (YCLWTGVCLG…SSGICSIVSD (400 aa)). A disordered region spans residues 433–478 (QPTITRGGSNSRSNSSNSRSLSIRRQGSRMLSMRRQRSGTSSMKHA). A compositionally biased stretch (low complexity) spans 441 to 457 (SNSRSNSSNSRSLSIRR). In terms of domain architecture, Protein kinase spans 496 to 794 (FSLENKIGSG…DIVGNLERAL (299 aa)). ATP is bound by residues 502–510 (IGSGSFGVV) and lysine 524. Aspartate 631 serves as the catalytic Proton acceptor.

The protein belongs to the protein kinase superfamily. Ser/Thr protein kinase family. In terms of assembly, homodimer. Expressed in roots, leaves, shoot apical meristems (SAM), and floral buds.

The protein resides in the membrane. The catalysed reaction is L-seryl-[protein] + ATP = O-phospho-L-seryl-[protein] + ADP + H(+). The enzyme catalyses L-threonyl-[protein] + ATP = O-phospho-L-threonyl-[protein] + ADP + H(+). Its function is as follows. Serine/threonine-protein kinase. In Arabidopsis thaliana (Mouse-ear cress), this protein is Putative serine/threonine-protein kinase-like protein CCR3 (CCR3).